Reading from the N-terminus, the 219-residue chain is DAN domain family member 5 (219 aa).

The first 19 residues, 1–19 (MLLFRAASLLPLLCFTVGA), serve as a signal peptide directing secretion. 4 cysteine pairs are disulfide-bonded: Cys118-Cys165, Cys132-Cys179, Cys142-Cys195, and Cys146-Cys197. A CTCK domain is found at 118-198 (CHALPFIQNV…VELVEECECE (81 aa)).

This sequence belongs to the DAN family. In terms of assembly, interacts with nr1-a.

The protein resides in the secreted. Functionally, plays an important role in regulating the left-right axis by blocking a tgfb1 cascade in the right posterior paraxial mesoderm. Functions as an inhibitor of bmp, tgfb1, nodal, activin and wnt signaling in the ectoderm. May inhibit mesodermal signals, probably through an inhibition of nodal/activin pathways. Seems to regulates cell fate specification and competence before the onset of neural induction. Expression in the entire ectodermal region prior to gastrulation might act to prevent fate specification in the ectoderm and ensure the maintenance of the stem-cell-like properties exhibited by ectodermal cells. The protein is DAN domain family member 5 (dand5) of Xenopus tropicalis (Western clawed frog).